Here is a 350-residue protein sequence, read N- to C-terminus: Alcohol dehydrogenase 1 (350 aa).

The Zn(2+) site is built by cysteine 44, threonine 46, histidine 67, cysteine 98, cysteine 101, cysteine 104, cysteine 112, and cysteine 154. Residues threonine 46 and histidine 67 each coordinate an alcohol. Threonine 46 lines the NAD(+) pocket. Residues 178–182 (GAGGG), aspartate 202, lysine 207, 271–273 (IGL), and arginine 343 each bind NAD(+).

The protein belongs to the zinc-containing alcohol dehydrogenase family. Homotetramer. Zn(2+) is required as a cofactor.

It localises to the cytoplasm. The protein localises to the secreted. It carries out the reaction a primary alcohol + NAD(+) = an aldehyde + NADH + H(+). It catalyses the reaction a secondary alcohol + NAD(+) = a ketone + NADH + H(+). This is Alcohol dehydrogenase 1 (alcA) from Emericella nidulans (strain FGSC A4 / ATCC 38163 / CBS 112.46 / NRRL 194 / M139) (Aspergillus nidulans).